A 209-amino-acid chain; its full sequence is Dual specificity phosphatase 29 (209 aa).

In terms of domain architecture, Tyrosine-protein phosphatase spans 45–193 (HVNEVWPNLY…LRELDIKLAL (149 aa)). 137 to 144 (NCAMGRSR) is a substrate binding site. The Phosphocysteine intermediate role is filled by cysteine 138.

This sequence belongs to the protein-tyrosine phosphatase family. Non-receptor class dual specificity subfamily.

The protein resides in the cytoplasm. The protein localises to the nucleus. The enzyme catalyses O-phospho-L-tyrosyl-[protein] + H2O = L-tyrosyl-[protein] + phosphate. It catalyses the reaction O-phospho-L-seryl-[protein] + H2O = L-seryl-[protein] + phosphate. It carries out the reaction O-phospho-L-threonyl-[protein] + H2O = L-threonyl-[protein] + phosphate. In terms of biological role, dual specificity phosphatase able to dephosphorylate phosphotyrosine, phosphoserine and phosphothreonine residues, with a preference for phosphotyrosine as a substrate. Dual specificity phosphatase able to dephosphorylate phosphotyrosine, phosphoserine and phosphothreonine residues within the same substrate, with a preference for phosphotyrosine as a substrate. Involved in the modulation of AMPK and MAPK1/2 signaling pathway. This Xenopus laevis (African clawed frog) protein is Dual specificity phosphatase 29 (dusp29).